The sequence spans 373 residues: Ferroptosis suppressor protein 1 (373 aa).

Gly2 carries N-myristoyl glycine lipidation. A helical transmembrane segment spans residues 7–27; the sequence is VDTGAVHVVIVGGGFGGIAAA. 6-hydroxy-FAD-binding positions include 18–22, Arg54, and Val82; that span reads GGGFG. N6-acetyllysine is present on Lys168. A 6-hydroxy-FAD-binding site is contributed by Asp285.

Belongs to the FAD-dependent oxidoreductase family. Interacts with importin subunits KPNA2 and IPO5; this interaction likely mediates the translocation into the nucleus upon oxidative stress. The cofactor is 6-hydroxy-FAD. Post-translationally, N-myristoylation at Gly-2 mediates the recruitment to lipid droplets and plasma membrane. In terms of processing, acetylation at Lys-168 prevents AIFM2 ubiquitination and degradation, thereby inhibiting ferroptosis. KAT2B mediates acetylation at Lys-168, while HDAC3 removes it. Ubiquitinated. AIFM2 undergoes 'Lys-29'-ubiquitination and proteasomal degradation, which is inhibited by acetylation at Lys-168. Detected in most normal tissues as two transcripts of 1.8 and 4.0 kb in length, respectively. Highly expressed in liver, testis, and kidney, and expressed at lower levels in pancreas, spleen, brain and lung. Expressed in heart (at protein level).

The protein localises to the lipid droplet. It localises to the cell membrane. Its subcellular location is the cytoplasm. The protein resides in the mitochondrion membrane. It is found in the nucleus. The catalysed reaction is ubiquinone-10 + NADH + H(+) = ubiquinol-10 + NAD(+). The enzyme catalyses phylloquinone + NADH + H(+) = phylloquinol + NAD(+). It catalyses the reaction menaquinone-4 + NADH + H(+) = menaquinol-4 + NAD(+). It carries out the reaction menadione + NADH + H(+) = menadiol + NAD(+). With respect to regulation, the modification by 4-hydroxy-2-nonenal (HNE) adduction in mitochondria results in loss of the oxidoreductase activity and activation of a novel function in mitochondrial oxidative stress signaling. An NAD(P)H-dependent oxidoreductase that acts as a key inhibitor of ferroptosis. At the plasma membrane, catalyzes reduction of coenzyme Q/ubiquinone-10 to ubiquinol-10, a lipophilic radical-trapping antioxidant that prevents lipid oxidative damage and consequently ferroptosis. Acts in parallel to GPX4 to suppress phospholipid peroxidation and ferroptosis. This anti-ferroptotic function is independent of cellular glutathione levels. Also acts as a potent radical-trapping antioxidant by mediating warfarin-resistant vitamin K reduction in the canonical vitamin K cycle: catalyzes NAD(P)H-dependent reduction of vitamin K (phylloquinone, menaquinone-4 and menadione) to hydroquinone forms. Hydroquinones act as potent radical-trapping antioxidants inhibitor of phospholipid peroxidation and ferroptosis. May play a role in mitochondrial stress signaling. Upon oxidative stress, associates with the lipid peroxidation end product 4-hydroxy-2-nonenal (HNE) forming a lipid adduct devoid of oxidoreductase activity, which then translocates from mitochondria into the nucleus triggering DNA damage and cell death. The chain is Ferroptosis suppressor protein 1 from Mus musculus (Mouse).